A 71-amino-acid polypeptide reads, in one-letter code: Immune-induced peptide 18 (71 aa).

Positions methionine 1–alanine 24 are cleaved as a signal peptide. A propeptide spanning residues serine 25–proline 26 is cleaved from the precursor. A disordered region spans residues proline 26–alanine 71. Residues proline 32 to serine 42 show a composition bias toward gly residues.

As to expression, hemolymph (at protein level).

The protein resides in the secreted. The protein is Immune-induced peptide 18 (IM18) of Drosophila melanogaster (Fruit fly).